The following is a 384-amino-acid chain: 8-amino-7-oxononanoate synthase (384 aa).

A substrate-binding site is contributed by Arg21. Residue 108-109 (GF) participates in pyridoxal 5'-phosphate binding. A substrate-binding site is contributed by His133. Pyridoxal 5'-phosphate contacts are provided by Ser179, His207, and Thr233. Lys236 bears the N6-(pyridoxal phosphate)lysine mark. Thr350 is a binding site for substrate.

The protein belongs to the class-II pyridoxal-phosphate-dependent aminotransferase family. BioF subfamily. As to quaternary structure, homodimer. Requires pyridoxal 5'-phosphate as cofactor.

The catalysed reaction is 6-carboxyhexanoyl-[ACP] + L-alanine + H(+) = (8S)-8-amino-7-oxononanoate + holo-[ACP] + CO2. It participates in cofactor biosynthesis; biotin biosynthesis. Its function is as follows. Catalyzes the decarboxylative condensation of pimeloyl-[acyl-carrier protein] and L-alanine to produce 8-amino-7-oxononanoate (AON), [acyl-carrier protein], and carbon dioxide. In Erwinia tasmaniensis (strain DSM 17950 / CFBP 7177 / CIP 109463 / NCPPB 4357 / Et1/99), this protein is 8-amino-7-oxononanoate synthase.